A 204-amino-acid chain; its full sequence is Probable UbiX-like flavin prenyltransferase (204 aa).

FMN is bound by residues 21–23 (GAT), S47, 98–101 (SMKS), and R133.

Belongs to the UbiX/PAD1 family. YclB subfamily. As to quaternary structure, homododecamer.

The enzyme catalyses dimethylallyl phosphate + FMNH2 = prenylated FMNH2 + phosphate. In terms of biological role, involved in the non-oxidative decarboxylation and detoxification of phenolic derivatives under both aerobic and anaerobic conditions. Flavin prenyltransferase that catalyzes the synthesis of the prenylated FMN cofactor (prenyl-FMN) for phenolic acid decarboxylase. The polypeptide is Probable UbiX-like flavin prenyltransferase (Bacillus subtilis (strain 168)).